A 341-amino-acid polypeptide reads, in one-letter code: MSMTPKLALQRLIDHTDFTHEEMLDVMQQIMGGAFTTVQIAGFLAGLRVKGETVTEIAAAAQVMRALSSKVEVEDSSYLVDTCGTGGAPTKAFNVSTASAFVAAGAGARIAKHGGRAASSKSGSADVLEALGVNIGLTPEQVARCVNEAGIGFMFAPNHHAAMKYAAPVRRELGVRTMFNLLGPMTNPAGAKRQVMGVFDRDLVSLLAHTLKKLGSEHVMVVHSADGMDEISFSADTYVAELKHGEVNEYTLNPAQFDMPLHEIDSIHVENAQQSSEIILGVLSGARGPARDIVLLNAGAAIYVSGIAGDLQDGIAQAAHSLDSGAALHKLQQLKALSQAA.

Residues Gly84, 94–97 (NVST), 112–120 (KHGGRAASS), and Ser124 each bind 5-phospho-alpha-D-ribose 1-diphosphate. Position 84 (Gly84) interacts with anthranilate. A Mg(2+)-binding site is contributed by Ser96. Arg170 provides a ligand contact to anthranilate. Residues Asp229 and Glu230 each coordinate Mg(2+).

It belongs to the anthranilate phosphoribosyltransferase family. As to quaternary structure, homodimer. Mg(2+) serves as cofactor.

The catalysed reaction is N-(5-phospho-beta-D-ribosyl)anthranilate + diphosphate = 5-phospho-alpha-D-ribose 1-diphosphate + anthranilate. Its pathway is amino-acid biosynthesis; L-tryptophan biosynthesis; L-tryptophan from chorismate: step 2/5. Its function is as follows. Catalyzes the transfer of the phosphoribosyl group of 5-phosphorylribose-1-pyrophosphate (PRPP) to anthranilate to yield N-(5'-phosphoribosyl)-anthranilate (PRA). In Methylobacillus flagellatus (strain ATCC 51484 / DSM 6875 / VKM B-1610 / KT), this protein is Anthranilate phosphoribosyltransferase.